The sequence spans 453 residues: Bifunctional protein GlmU (453 aa).

The pyrophosphorylase stretch occupies residues 1–227; the sequence is MNKLSVVILA…LMEVEGVNNR (227 aa). Residues 9–12, K23, Q74, 79–80, 101–103, G138, E152, N167, and N225 contribute to the UDP-N-acetyl-alpha-D-glucosamine site; these read LAAG, GT, and YGD. D103 lines the Mg(2+) pocket. N225 is a Mg(2+) binding site. The linker stretch occupies residues 228–248; the sequence is LQLANLERHYQRKQVEKLLLA. An N-acetyltransferase region spans residues 249–453; the sequence is GVTFADPARF…ISNWQRPKRK (205 aa). Residues R331 and K349 each coordinate UDP-N-acetyl-alpha-D-glucosamine. The Proton acceptor role is filled by H361. UDP-N-acetyl-alpha-D-glucosamine is bound by residues Y364 and N375. Residues A378, 384–385, S403, A421, and R438 each bind acetyl-CoA; that span reads NY.

This sequence in the N-terminal section; belongs to the N-acetylglucosamine-1-phosphate uridyltransferase family. In the C-terminal section; belongs to the transferase hexapeptide repeat family. As to quaternary structure, homotrimer. Mg(2+) is required as a cofactor.

The protein localises to the cytoplasm. It catalyses the reaction alpha-D-glucosamine 1-phosphate + acetyl-CoA = N-acetyl-alpha-D-glucosamine 1-phosphate + CoA + H(+). The catalysed reaction is N-acetyl-alpha-D-glucosamine 1-phosphate + UTP + H(+) = UDP-N-acetyl-alpha-D-glucosamine + diphosphate. It participates in nucleotide-sugar biosynthesis; UDP-N-acetyl-alpha-D-glucosamine biosynthesis; N-acetyl-alpha-D-glucosamine 1-phosphate from alpha-D-glucosamine 6-phosphate (route II): step 2/2. Its pathway is nucleotide-sugar biosynthesis; UDP-N-acetyl-alpha-D-glucosamine biosynthesis; UDP-N-acetyl-alpha-D-glucosamine from N-acetyl-alpha-D-glucosamine 1-phosphate: step 1/1. It functions in the pathway bacterial outer membrane biogenesis; LPS lipid A biosynthesis. Catalyzes the last two sequential reactions in the de novo biosynthetic pathway for UDP-N-acetylglucosamine (UDP-GlcNAc). The C-terminal domain catalyzes the transfer of acetyl group from acetyl coenzyme A to glucosamine-1-phosphate (GlcN-1-P) to produce N-acetylglucosamine-1-phosphate (GlcNAc-1-P), which is converted into UDP-GlcNAc by the transfer of uridine 5-monophosphate (from uridine 5-triphosphate), a reaction catalyzed by the N-terminal domain. In Histophilus somni (strain 2336) (Haemophilus somnus), this protein is Bifunctional protein GlmU.